The primary structure comprises 246 residues: Hsp70 nucleotide exchange factor fes-1 (246 aa).

A compositionally biased stretch (polar residues) spans 23–40 (QSYHSNGAPTPNNNSGPA). Residues 23 to 63 (QSYHSNGAPTPNNNSGPATGTGAVATSPAPQVTGSGPRPVD) form a disordered region. ARM repeat units follow at residues 48–92 (TSPA…DPSP), 113–152 (LDNANLLEELSLWSPLISLLDHEDEDMRYHAAWCLGTAVQ), 155–196 (QKTQ…SAVR), and 214–244 (HEVLVNNGTKVDAADMDKVDEVIDVLRNKAK).

It belongs to the FES1 family.

It is found in the cytoplasm. Its function is as follows. Functions as a nucleotide exchange factor (NEF) for Hsp70 chaperones which accelerates the release of ADP. Required for fully efficient Hsp70-mediated folding of proteins. The sequence is that of Hsp70 nucleotide exchange factor fes-1 (fes-1) from Neurospora crassa (strain ATCC 24698 / 74-OR23-1A / CBS 708.71 / DSM 1257 / FGSC 987).